The primary structure comprises 123 residues: Small ribosomal subunit protein uS12 (123 aa).

The interval 1–28 (MPTIQQLIRKPRQPKVKRSKSQHLESCP) is disordered. The segment covering 9-21 (RKPRQPKVKRSKS) has biased composition (basic residues). Asp89 is modified (3-methylthioaspartic acid).

It belongs to the universal ribosomal protein uS12 family. As to quaternary structure, part of the 30S ribosomal subunit. Contacts proteins S8 and S17. May interact with IF1 in the 30S initiation complex.

Its function is as follows. With S4 and S5 plays an important role in translational accuracy. Functionally, interacts with and stabilizes bases of the 16S rRNA that are involved in tRNA selection in the A site and with the mRNA backbone. Located at the interface of the 30S and 50S subunits, it traverses the body of the 30S subunit contacting proteins on the other side and probably holding the rRNA structure together. The combined cluster of proteins S8, S12 and S17 appears to hold together the shoulder and platform of the 30S subunit. This Dinoroseobacter shibae (strain DSM 16493 / NCIMB 14021 / DFL 12) protein is Small ribosomal subunit protein uS12.